A 568-amino-acid polypeptide reads, in one-letter code: Protein OCTOPUS-like (568 aa).

Disordered regions lie at residues 1–27, 78–99, 168–203, 242–276, 360–428, 446–512, and 526–558; these read MNLS…RLST, LFKP…RPGF, EEAE…ELKP, QKQK…PRFS, PGGS…DKKS, DDEE…SKDG, and RSWK…SHGH. The segment covering 82 to 93 has biased composition (low complexity); sequence SSSGTNNSNGNG. Positions 168–179 are enriched in acidic residues; it reads EEAEIEEDEENG. Over residues 180 to 193 the composition is skewed to basic and acidic residues; sequence EKDPGEIVEEKSSE. Phosphoserine is present on serine 260. The segment covering 400–423 has biased composition (polar residues); the sequence is SVSNSTTTIDSNSMETAENKGNQN. The span at 532–546 shows a compositional bias: gly residues; the sequence is GGSGGGGGGGGGGGW.

Belongs to the OCTOPUS family. Phosphorylation at Ser-260 amplifies the promotion of protophloem differentiation.

It is found in the cell membrane. It localises to the cytoplasm. Its function is as follows. Potentiates primary root protophloem differentiation. Regulates roots architecture. This chain is Protein OCTOPUS-like, found in Arabidopsis thaliana (Mouse-ear cress).